The following is a 360-amino-acid chain: Transcriptional coactivator MYCFIDRAFT_190109 (360 aa).

Residues 3–67 form the HTH iclR-type domain; sequence GMALNQLLAC…GFLHEPRPGQ (65 aa). Residues 33-52 constitute a DNA-binding region (H-T-H motif); it reads ARDVADLTGVPETQLCRVVR.

It is found in the nucleus. Transcriptional coactivator; part of the gene cluster that mediates the biosynthesis of an emodin derivative that may be involved in black Sigatoka disease of banana. With MYCFIDRAFT_198930, coregulates the production of the PKS8-1 cluster product. The sequence is that of Transcriptional coactivator MYCFIDRAFT_190109 from Pseudocercospora fijiensis (strain CIRAD86) (Black leaf streak disease fungus).